Reading from the N-terminus, the 313-residue chain is Pyrimidine-specific ribonucleoside hydrolase RihB (313 aa).

The active-site Proton acceptor is the Asp-11. Residues Asp-11, Asp-16, and Val-124 each coordinate Ca(2+). Gln-227 and His-239 together coordinate substrate. Asp-240 contacts Ca(2+).

Belongs to the IUNH family. RihB subfamily. As to quaternary structure, homotetramer. Ca(2+) serves as cofactor.

It carries out the reaction a pyrimidine ribonucleoside + H2O = a pyrimidine nucleobase + D-ribose. Functionally, hydrolyzes cytidine or uridine to ribose and cytosine or uracil, respectively. Has a clear preference for cytidine over uridine. Strictly specific for ribonucleosides. This is Pyrimidine-specific ribonucleoside hydrolase RihB from Escherichia coli O9:H4 (strain HS).